Consider the following 273-residue polypeptide: Transposable element Tcb1 transposase (273 aa).

This sequence belongs to the transposase 5 family.

The protein resides in the nucleus. Its function is as follows. Probably essential for transposable element Tcb1 transposition. The insertion of Tcb1 is the main cause of spontaneous mutations. This chain is Transposable element Tcb1 transposase, found in Caenorhabditis briggsae.